Here is a 162-residue protein sequence, read N- to C-terminus: MAQHPIATLNEELVPRLPPSSPTLFEAKKKKNLSFEAIAKHVGRDEVAIAALFYGQAMASAQDIKKLSEILDIDAGMLESQLSGFPNRGSTLDMPPKDPTIYRLYEIVQNYGQAYKAVLHEKFGDGIMSAISFSTKIEKETDDKGEWAKITLRGKWLPYSRF.

Active-site residues include Arg103, Glu106, and Ser129.

Belongs to the cyanase family.

The enzyme catalyses cyanate + hydrogencarbonate + 3 H(+) = NH4(+) + 2 CO2. Catalyzes the reaction of cyanate with bicarbonate to produce ammonia and carbon dioxide. The chain is Cyanate hydratase from Pyrenophora tritici-repentis (strain Pt-1C-BFP) (Wheat tan spot fungus).